A 212-amino-acid chain; its full sequence is Vesicle transport protein SFT2C (212 aa).

Residues 1-78 (MADLHRQLQD…TRGQRLVAGG (78 aa)) lie on the Cytoplasmic side of the membrane. A helical transmembrane segment spans residues 79-99 (LCLLLAALCFGLAALYAPVLL). Residues 100–104 (LRARK) lie on the Lumenal side of the membrane. A helical membrane pass occupies residues 105–125 (FALLWSLGSVLAWASAALLRG). At 126 to 142 (GPACGRLLRGEETPSRS) the chain is on the cytoplasmic side. Residues 143 to 165 (TLGYAAALGATLYAALVLRSTVL) form a helical membrane-spanning segment. Residues 166–174 (TALGACAQV) are Lumenal-facing. The helical transmembrane segment at 175–197 (AALLYALIGLLPWGGVTALRLAL) threads the bilayer. Residues 198 to 212 (GRLNRGTGLANALPV) are Cytoplasmic-facing.

This sequence belongs to the SFT2 family.

Its subcellular location is the membrane. Its function is as follows. May be involved in fusion of retrograde transport vesicles derived from an endocytic compartment with the Golgi complex. This chain is Vesicle transport protein SFT2C, found in Mus musculus (Mouse).